A 354-amino-acid polypeptide reads, in one-letter code: tRNA N6-adenosine threonylcarbamoyltransferase (354 aa).

Residues His-115 and His-119 each coordinate Fe cation. Residues Leu-138–Gly-142, Asp-171, Gly-184, and Asn-276 contribute to the substrate site. Asp-304 contributes to the Fe cation binding site.

This sequence belongs to the KAE1 / TsaD family. Fe(2+) serves as cofactor.

It localises to the cytoplasm. The enzyme catalyses L-threonylcarbamoyladenylate + adenosine(37) in tRNA = N(6)-L-threonylcarbamoyladenosine(37) in tRNA + AMP + H(+). Its function is as follows. Required for the formation of a threonylcarbamoyl group on adenosine at position 37 (t(6)A37) in tRNAs that read codons beginning with adenine. Is involved in the transfer of the threonylcarbamoyl moiety of threonylcarbamoyl-AMP (TC-AMP) to the N6 group of A37, together with TsaE and TsaB. TsaD likely plays a direct catalytic role in this reaction. In Xanthomonas oryzae pv. oryzae (strain MAFF 311018), this protein is tRNA N6-adenosine threonylcarbamoyltransferase.